A 191-amino-acid chain; its full sequence is NF-kappa-B inhibitor-interacting Ras-like protein 2 (191 aa).

Positions 1-191 (MGKSCKVVVC…KNKGSGSVDG (191 aa)) are small GTPase-like. 11 to 18 (GQAAVGKT) lines the GTP pocket. An Effector region motif is present at residues 35-43 (MIETQEDIY). GTP is bound by residues 61 to 65 (DTRGL) and 120 to 123 (NKCD). Positions 170–191 (QPQSKSAFPLSRKNKGSGSVDG) are disordered.

It belongs to the small GTPase superfamily. Ras family. KappaB-Ras subfamily.

Its subcellular location is the cytoplasm. Functionally, atypical Ras-like protein that acts as a potent regulator of NF-kappa-B activity by preventing the degradation of NF-kappa-B inhibitor beta (NFKBIB) by most signals, explaining why NFKBIB is more resistant to degradation. The chain is NF-kappa-B inhibitor-interacting Ras-like protein 2 (NKIRAS2) from Gallus gallus (Chicken).